The primary structure comprises 488 residues: Ribulose bisphosphate carboxylase large chain (488 aa).

The substrate site is built by asparagine 128 and threonine 178. Residue lysine 180 is the Proton acceptor of the active site. Lysine 182 contributes to the substrate binding site. Lysine 206, aspartate 208, and glutamate 209 together coordinate Mg(2+). Position 206 is an N6-carboxylysine (lysine 206). Histidine 298 serves as the catalytic Proton acceptor. Residues arginine 299, histidine 331, and serine 383 each coordinate substrate.

The protein belongs to the RuBisCO large chain family. Type I subfamily. In terms of assembly, heterohexadecamer of 8 large chains and 8 small chains. It depends on Mg(2+) as a cofactor.

The catalysed reaction is 2 (2R)-3-phosphoglycerate + 2 H(+) = D-ribulose 1,5-bisphosphate + CO2 + H2O. It carries out the reaction D-ribulose 1,5-bisphosphate + O2 = 2-phosphoglycolate + (2R)-3-phosphoglycerate + 2 H(+). RuBisCO catalyzes two reactions: the carboxylation of D-ribulose 1,5-bisphosphate, the primary event in carbon dioxide fixation, as well as the oxidative fragmentation of the pentose substrate. Both reactions occur simultaneously and in competition at the same active site. This is Ribulose bisphosphate carboxylase large chain from Xanthobacter autotrophicus (strain ATCC BAA-1158 / Py2).